A 354-amino-acid chain; its full sequence is Selenide, water dikinase (354 aa).

Residue cysteine 23 is part of the active site. ATP is bound by residues lysine 26 and 54–56; that span reads TAD. Position 57 (aspartate 57) interacts with Mg(2+). ATP-binding positions include aspartate 74, aspartate 97, and 145 to 147; that span reads GHS. Residue aspartate 97 coordinates Mg(2+). Aspartate 233 contributes to the Mg(2+) binding site.

The protein belongs to the selenophosphate synthase 1 family. Class I subfamily. As to quaternary structure, homodimer. The cofactor is Mg(2+).

The enzyme catalyses hydrogenselenide + ATP + H2O = selenophosphate + AMP + phosphate + 2 H(+). In terms of biological role, synthesizes selenophosphate from selenide and ATP. This is Selenide, water dikinase from Paraburkholderia xenovorans (strain LB400).